A 1177-amino-acid polypeptide reads, in one-letter code: Solute carrier family 9 member C1 (1177 aa).

Residues 1-17 lie on the Extracellular side of the membrane; it reads MAGIFKEFFFSTEDLPE. Residues 18–37 traverse the membrane as a helical segment; it reads VILTLSLISSIGAFLNRHLE. The Cytoplasmic segment spans residues 38–42; it reads DFPIP. Residues 43 to 60 traverse the membrane as a helical segment; that stretch reads VPVILFLLGCSFEVLSFT. Residues 61–76 lie on the Extracellular side of the membrane; sequence SSQVQRYANAIQWMSP. The chain crosses the membrane as a helical span at residues 77-93; it reads DLFFRIFTPVVFFTTAF. Over 94–103 the chain is Cytoplasmic; the sequence is DMDTYMLQKL. A helical membrane pass occupies residues 104–129; the sequence is FWQILLISIPGFLVNYILVLWHLASV. The transport core domain stretch occupies residues 104-191; the sequence is FWQILLISIP…SLITFTSIMD (88 aa). Topologically, residues 130 to 135 are extracellular; the sequence is NQLLLK. Residues 136–161 form a helical membrane-spanning segment; the sequence is PTQWLLFSAILVSSDPMLTAAAIRDL. The Cytoplasmic segment spans residues 162-164; that stretch reads GLS. The helical transmembrane segment at 165–190 threads the bilayer; sequence RSLISLINGESLMTSVISLITFTSIM. Residues 191-204 are Extracellular-facing; that stretch reads DFDQRLQSKRNHTL. A helical transmembrane segment spans residues 205-236; it reads AEEIVGGICSYIIASFLFGILSSKLIQFWMST. The Cytoplasmic segment spans residues 237–240; it reads VFGD. A helical transmembrane segment spans residues 241 to 262; that stretch reads DVNHISLIFSILYLIFYICELV. The Extracellular portion of the chain corresponds to 263–265; sequence GMS. The helical transmembrane segment at 266-279 threads the bilayer; the sequence is GIFTLAIVGLLLNS. The Cytoplasmic portion of the chain corresponds to 280–286; that stretch reads TSFKAAI. The helical transmembrane segment at 287 to 319 threads the bilayer; it reads EETLLLEFWTFLSRIAFLMVFTFFGLLIPAHTY. Residues 320-324 lie on the Extracellular side of the membrane; it reads LYIEF. Residues 325 to 354 traverse the membrane as a helical segment; it reads VDIYYSLNIYLTLIVLRFLTLLLISPVLSR. Residues 325 to 426 are transport core domain; that stretch reads VDIYYSLNIY…FILPVAVTIL (102 aa). Residues 355–360 lie on the Cytoplasmic side of the membrane; that stretch reads VGHEFS. The chain crosses the membrane as a helical span at residues 361 to 391; it reads WRWIFIMVCSEMKGMPNINMALLLAYSDLYF. At 392-395 the chain is on the extracellular side; it reads GSDK. Residues 396-426 form a helical membrane-spanning segment; that stretch reads EKSQILFHGVLVCLITLVVNRFILPVAVTIL. At 427–612 the chain is on the cytoplasmic side; sequence GLRDATSTKY…ICHTIVFTEE (186 aa). The interval 598–678 is ion transport-like; sequence YFFFRICHTI…DFFSHAWNIF (81 aa). The chain crosses the membrane as a helical span at residues 613–633; it reads FEHVGYLVILMNIFPFIISWI. At 634-637 the chain is on the extracellular side; it reads SQLN. A helical transmembrane segment spans residues 638–664; that stretch reads VIYHSELKHTNYCFLTLYILEALLKIA. Residues 665-671 are Cytoplasmic-facing; the sequence is AMRKDFF. The chain crosses the membrane as a helical span at residues 672-696; sequence SHAWNIFELAITLIGILHVILIEID. The Extracellular segment spans residues 697–704; the sequence is TIKYIFNE. The helical transmembrane segment at 705-731 threads the bilayer; the sequence is TEVIVFIKVVQFFRILRIFKLIAPKLL. The Cytoplasmic segment spans residues 732–1177; that stretch reads QIIDKRMSHQ…RINLRKVRKE (446 aa).

Belongs to the monovalent cation:proton antiporter 1 (CPA1) transporter (TC 2.A.36) family. As to quaternary structure, interacts with soluble adenylyl cyclase (sAC). In terms of tissue distribution, sperm.

The protein resides in the cell projection. It is found in the cilium. It localises to the flagellum membrane. Sperm-specific solute carrier involved in intracellular pH regulation of spermatozoa. Required for sperm motility and fertility. Involved in sperm cell hyperactivation, a step needed for sperm motility which is essential late in the preparation of sperm for fertilization. Required for the expression and bicarbonate regulation of the soluble adenylyl cyclase (sAC). The polypeptide is Solute carrier family 9 member C1 (SLC9C1) (Homo sapiens (Human)).